A 60-amino-acid chain; its full sequence is Large ribosomal subunit protein bL32 (60 aa).

Residues 1-16 are compositionally biased toward basic residues; the sequence is MAVPRRKTSPSRRGMR. Positions 1 to 60 are disordered; that stretch reads MAVPRRKTSPSRRGMRRSADAIKKPTYVEDKDSGELRRPHHLDLKTGMYKGRQVLKKKDA. Basic and acidic residues predominate over residues 17 to 44; the sequence is RSADAIKKPTYVEDKDSGELRRPHHLDL.

This sequence belongs to the bacterial ribosomal protein bL32 family.

The chain is Large ribosomal subunit protein bL32 from Bradyrhizobium sp. (strain BTAi1 / ATCC BAA-1182).